The sequence spans 164 residues: Flavodoxin (164 aa).

The 157-residue stretch at 4-160 (IGIFFGTDSG…RISKWVEQVK (157 aa)) folds into the Flavodoxin-like domain.

This sequence belongs to the flavodoxin family. FMN is required as a cofactor.

Functionally, low-potential electron donor to a number of redox enzymes. The protein is Flavodoxin (fldA) of Helicobacter pylori (strain ATCC 700392 / 26695) (Campylobacter pylori).